The sequence spans 213 residues: Pyrrolidone-carboxylate peptidase (213 aa).

Active-site residues include Glu81, Cys144, and His166.

The protein belongs to the peptidase C15 family. In terms of assembly, homotetramer.

It is found in the cytoplasm. It carries out the reaction Release of an N-terminal pyroglutamyl group from a polypeptide, the second amino acid generally not being Pro.. Its function is as follows. Removes 5-oxoproline from various penultimate amino acid residues except L-proline. This is Pyrrolidone-carboxylate peptidase from Pseudomonas fluorescens (strain SBW25).